Here is a 68-residue protein sequence, read N- to C-terminus: Dermaseptin-H5 (68 aa).

An N-terminal signal peptide occupies residues 1–17 (KSLFLVLFLGMVSLSIC). The propeptide occupies 18–38 (EEEKRENEDEEKQEDDEQSEM). The disordered stretch occupies residues 19–40 (EEKRENEDEEKQEDDEQSEMKR). Positions 25 to 35 (EDEEKQEDDEQ) are enriched in acidic residues. Leucine amide is present on Leu65. A propeptide spanning residues 67–68 (EQ) is cleaved from the precursor.

As to expression, expressed by the skin glands.

It localises to the secreted. Its function is as follows. Has antibacterial activity against the Gram-negative bacteria E.coli ATCC 11775 (MIC=0.5 uM), and the Gram-positive bacteria S.aureus ATCC 12600 (MIC=0.5 uM) and M.luteus ATCC 49732 (MIC=2.0 uM). Does not inhibit the growth of the fungus C.albicans. Probably acts by disturbing membrane functions with its amphipathic structure. This chain is Dermaseptin-H5, found in Pithecopus azureus (Orange-legged monkey tree frog).